The primary structure comprises 200 residues: MKKSNNNLTLYKGYINREDRERLHGHKSFVIWFTGLPASGKSTIAHLVEKELYKRGCSTYVLDGDNVRYGLCSDLGFSIEERKENIRRVGELVKLFVDAGIIVITSFISPFKEDREKVRSLFKEEDFIEVYTKCPVETCSLRDQKGIYKKAIKGEIKNFTGISAPYEEPENPEITIFTDIDSPIEACQKILRYIKDKLKL.

An ATP-binding site is contributed by 35 to 42 (GLPASGKS). Serine 109 functions as the Phosphoserine intermediate in the catalytic mechanism.

It belongs to the APS kinase family.

The enzyme catalyses adenosine 5'-phosphosulfate + ATP = 3'-phosphoadenylyl sulfate + ADP + H(+). The protein operates within sulfur metabolism; hydrogen sulfide biosynthesis; sulfite from sulfate: step 2/3. Functionally, catalyzes the synthesis of activated sulfate. This chain is Adenylyl-sulfate kinase, found in Thermodesulfovibrio yellowstonii (strain ATCC 51303 / DSM 11347 / YP87).